Reading from the N-terminus, the 448-residue chain is Trigger factor (448 aa).

Residues 172-257 (GDRVTVDFVG…MKKIEWPHLP (86 aa)) enclose the PPIase FKBP-type domain.

The protein belongs to the FKBP-type PPIase family. Tig subfamily.

The protein localises to the cytoplasm. The enzyme catalyses [protein]-peptidylproline (omega=180) = [protein]-peptidylproline (omega=0). Its function is as follows. Involved in protein export. Acts as a chaperone by maintaining the newly synthesized protein in an open conformation. Functions as a peptidyl-prolyl cis-trans isomerase. This is Trigger factor from Paraburkholderia xenovorans (strain LB400).